A 600-amino-acid chain; its full sequence is NADH-ubiquinone oxidoreductase chain 5 (600 aa).

The next 16 helical transmembrane spans lie at 1–21 (MYIL…LFGR), 27–47 (GAGI…LLIF), 81–101 (LTAV…IFST), 110–130 (VPRF…LVTS), 136–156 (LFIG…FWLT), 178–198 (FVLA…ASVF), 200–220 (IVAL…FIGA), 241–261 (TPVS…FLLI), 274–294 (LMVV…IGLV), 301–323 (VIAY…SQYS), 327–347 (FHLM…GSVI), 366–386 (IPFT…FPYL), 404–424 (YLAF…AYSL), 450–470 (WNLT…GYLT), 488–508 (SIKL…VVLY), and 520–540 (SPVG…NYII).

Belongs to the complex I subunit 5 family.

It localises to the mitochondrion inner membrane. It catalyses the reaction a ubiquinone + NADH + 5 H(+)(in) = a ubiquinol + NAD(+) + 4 H(+)(out). In terms of biological role, core subunit of the mitochondrial membrane respiratory chain NADH dehydrogenase (Complex I) that is believed to belong to the minimal assembly required for catalysis. Complex I functions in the transfer of electrons from NADH to the respiratory chain. The immediate electron acceptor for the enzyme is believed to be ubiquinone. This chain is NADH-ubiquinone oxidoreductase chain 5 (ND5), found in Metridium senile (Brown sea anemone).